The chain runs to 182 residues: Endoribonuclease YbeY (182 aa).

Positions 115, 119, and 125 each coordinate Zn(2+).

The protein belongs to the endoribonuclease YbeY family. Requires Zn(2+) as cofactor.

The protein resides in the cytoplasm. Single strand-specific metallo-endoribonuclease involved in late-stage 70S ribosome quality control and in maturation of the 3' terminus of the 16S rRNA. The polypeptide is Endoribonuclease YbeY (Bifidobacterium longum (strain NCC 2705)).